The following is a 311-amino-acid chain: Pyrimidine-specific ribonucleoside hydrolase RihA (311 aa).

Residue His240 is part of the active site.

Belongs to the IUNH family. RihA subfamily.

Functionally, hydrolyzes cytidine or uridine to ribose and cytosine or uracil, respectively. This Salmonella schwarzengrund (strain CVM19633) protein is Pyrimidine-specific ribonucleoside hydrolase RihA.